The sequence spans 353 residues: Phosphoribosylformylglycinamidine cyclo-ligase (353 aa).

It belongs to the AIR synthase family.

It is found in the cytoplasm. The catalysed reaction is 2-formamido-N(1)-(5-O-phospho-beta-D-ribosyl)acetamidine + ATP = 5-amino-1-(5-phospho-beta-D-ribosyl)imidazole + ADP + phosphate + H(+). It functions in the pathway purine metabolism; IMP biosynthesis via de novo pathway; 5-amino-1-(5-phospho-D-ribosyl)imidazole from N(2)-formyl-N(1)-(5-phospho-D-ribosyl)glycinamide: step 2/2. The protein is Phosphoribosylformylglycinamidine cyclo-ligase of Symbiobacterium thermophilum (strain DSM 24528 / JCM 14929 / IAM 14863 / T).